A 403-amino-acid polypeptide reads, in one-letter code: Phosphoglycerate kinase (403 aa).

Substrate contacts are provided by residues 24–26 (DLN), arginine 39, 62–65 (HLGR), arginine 121, and arginine 161. Residues lysine 211, glycine 299, glutamate 330, and 359-362 (GGDS) contribute to the ATP site.

It belongs to the phosphoglycerate kinase family. In terms of assembly, monomer.

The protein resides in the cytoplasm. It catalyses the reaction (2R)-3-phosphoglycerate + ATP = (2R)-3-phospho-glyceroyl phosphate + ADP. Its pathway is carbohydrate degradation; glycolysis; pyruvate from D-glyceraldehyde 3-phosphate: step 2/5. The chain is Phosphoglycerate kinase from Corynebacterium jeikeium (strain K411).